The sequence spans 301 residues: D-alanine--D-alanine ligase (301 aa).

Positions 101 to 296 (KLMWRAAGLA…YPTLVRRVLE (196 aa)) constitute an ATP-grasp domain. 127–182 (EEELGLPLFVKPAREGSSIGVTKVKERGALKAAYEEAARHDPLVIAEKGVMGGEYT) is a binding site for ATP. Asp-250, Glu-263, and Asn-265 together coordinate Mg(2+).

The protein belongs to the D-alanine--D-alanine ligase family. It depends on Mg(2+) as a cofactor. Mn(2+) is required as a cofactor.

The protein resides in the cytoplasm. The enzyme catalyses 2 D-alanine + ATP = D-alanyl-D-alanine + ADP + phosphate + H(+). The protein operates within cell wall biogenesis; peptidoglycan biosynthesis. In terms of biological role, cell wall formation. This chain is D-alanine--D-alanine ligase, found in Dechloromonas aromatica (strain RCB).